We begin with the raw amino-acid sequence, 1508 residues long: DNA-directed RNA polymerase subunit beta' (1508 aa).

Zn(2+) is bound by residues C71, C73, C86, and C89. Positions 470, 472, and 474 each coordinate Mg(2+). 4 residues coordinate Zn(2+): C804, C878, C885, and C888.

The protein belongs to the RNA polymerase beta' chain family. In terms of assembly, the RNAP catalytic core consists of 2 alpha, 1 beta, 1 beta' and 1 omega subunit. When a sigma factor is associated with the core the holoenzyme is formed, which can initiate transcription. Requires Mg(2+) as cofactor. It depends on Zn(2+) as a cofactor.

It catalyses the reaction RNA(n) + a ribonucleoside 5'-triphosphate = RNA(n+1) + diphosphate. In terms of biological role, DNA-dependent RNA polymerase catalyzes the transcription of DNA into RNA using the four ribonucleoside triphosphates as substrates. This chain is DNA-directed RNA polymerase subunit beta', found in Campylobacter fetus subsp. fetus (strain 82-40).